The chain runs to 279 residues: Probable endonuclease 4 (279 aa).

Zn(2+) is bound by residues His-68, His-108, Glu-143, Asp-177, His-180, His-214, Asp-227, His-229, and Glu-259.

This sequence belongs to the AP endonuclease 2 family. The cofactor is Zn(2+).

It catalyses the reaction Endonucleolytic cleavage to 5'-phosphooligonucleotide end-products.. Its function is as follows. Endonuclease IV plays a role in DNA repair. It cleaves phosphodiester bonds at apurinic or apyrimidinic (AP) sites, generating a 3'-hydroxyl group and a 5'-terminal sugar phosphate. This chain is Probable endonuclease 4, found in Nitrosopumilus maritimus (strain SCM1).